The primary structure comprises 415 residues: Camphor 5-monooxygenase (415 aa).

Residue Cys-358 coordinates heme.

This sequence belongs to the cytochrome P450 family. It depends on heme as a cofactor.

Its subcellular location is the cytoplasm. The enzyme catalyses 2 reduced [2Fe-2S]-[putidaredoxin] + (1R,4R)-camphor + O2 + 2 H(+) = (1R,4R,5R)-5-hydroxycamphor + 2 oxidized [2Fe-2S]-[putidaredoxin] + H2O. Its pathway is terpene metabolism; (R)-camphor degradation. In terms of biological role, involved in a camphor oxidation system. The chain is Camphor 5-monooxygenase (camC) from Pseudomonas putida (Arthrobacter siderocapsulatus).